Here is a 129-residue protein sequence, read N- to C-terminus: D-ribose pyranase (129 aa).

The active-site Proton donor is histidine 20. Substrate contacts are provided by residues aspartate 28, histidine 96, and 118–120; that span reads YAN.

This sequence belongs to the RbsD / FucU family. RbsD subfamily. In terms of assembly, homodecamer.

It localises to the cytoplasm. The enzyme catalyses beta-D-ribopyranose = beta-D-ribofuranose. The protein operates within carbohydrate metabolism; D-ribose degradation; D-ribose 5-phosphate from beta-D-ribopyranose: step 1/2. Catalyzes the interconversion of beta-pyran and beta-furan forms of D-ribose. The chain is D-ribose pyranase from Streptomyces coelicolor (strain ATCC BAA-471 / A3(2) / M145).